We begin with the raw amino-acid sequence, 430 residues long: GTPase Obg (430 aa).

An Obg domain is found at 1 to 158 (MFIDTAKVFV…LNIVLELKLL (158 aa)). The OBG-type G domain maps to 159 to 331 (ADVGLLGFPN…VMKEAARILK (173 aa)). GTP is bound by residues 165–172 (GFPNVGKS), 190–194 (FTTLK), 212–215 (DIPG), 282–285 (NKSD), and 312–314 (SAA). Residues serine 172 and threonine 192 each coordinate Mg(2+). Positions 345 to 430 (MYIPEEKRFT…LNDFEFEYIL (86 aa)) constitute an OCT domain.

This sequence belongs to the TRAFAC class OBG-HflX-like GTPase superfamily. OBG GTPase family. Monomer. It depends on Mg(2+) as a cofactor.

The protein localises to the cytoplasm. Its function is as follows. An essential GTPase which binds GTP, GDP and possibly (p)ppGpp with moderate affinity, with high nucleotide exchange rates and a fairly low GTP hydrolysis rate. Plays a role in control of the cell cycle, stress response, ribosome biogenesis and in those bacteria that undergo differentiation, in morphogenesis control. In Clostridium beijerinckii (strain ATCC 51743 / NCIMB 8052) (Clostridium acetobutylicum), this protein is GTPase Obg.